The sequence spans 318 residues: Probable endolytic peptidoglycan transglycosylase RlpA (318 aa).

The first 21 residues, 1-21 (MMDKRVVAVAAVLWNVQMLFA), serve as a signal peptide directing secretion. Residues 121–191 (DPNAHASQQR…GVANTTDVPA (71 aa)) are disordered. Over residues 125-137 (HASQQRNDRQTSP) the composition is skewed to polar residues.

It belongs to the RlpA family.

Lytic transglycosylase with a strong preference for naked glycan strands that lack stem peptides. This chain is Probable endolytic peptidoglycan transglycosylase RlpA, found in Treponema pallidum (strain Nichols).